The chain runs to 240 residues: Caffeoyl-CoA O-methyltransferase 5 (240 aa).

Residue Lys14 participates in substrate binding. Residues Thr56, Glu78, 80–81, Ser86, Asp104, and Ala133 contribute to the S-adenosyl-L-methionine site; that span reads GV. Asp156 lines the substrate pocket. An a divalent metal cation-binding site is contributed by Asp156. Residue Asp158 coordinates S-adenosyl-L-methionine. Asp182 and Asn183 together coordinate a divalent metal cation. Asn187 is a substrate binding site.

This sequence belongs to the class I-like SAM-binding methyltransferase superfamily. Cation-dependent O-methyltransferase family. CCoAMT subfamily. Mg(2+) serves as cofactor. Expression steadily increases from the bottom to the top of the plant.

It carries out the reaction (E)-caffeoyl-CoA + S-adenosyl-L-methionine = (E)-feruloyl-CoA + S-adenosyl-L-homocysteine + H(+). The protein operates within aromatic compound metabolism; phenylpropanoid biosynthesis. In terms of biological role, methylates caffeoyl-CoA to feruloyl-CoA and 5-hydroxyferuloyl-CoA to sinapoyl-CoA. Plays a role in the synthesis of feruloylated polysaccharides. Involved in the reinforcement of the plant cell wall. Also involved in the responding to wounding or pathogen challenge by the increased formation of cell wall-bound ferulic acid polymers. Methylates 5-hydroxyferulolyl-CoA more efficiently than caffeoyl-CoA. The polypeptide is Caffeoyl-CoA O-methyltransferase 5 (CCOAOMT5) (Nicotiana tabacum (Common tobacco)).